Here is an 823-residue protein sequence, read N- to C-terminus: Trimethylamine-N-oxide reductase (823 aa).

A signal peptide (tat-type signal) is located at residues 1–32 (MKQSRRQFLKNMSAMAATFAMPNFLIAQNAFA). Ser-181 is a binding site for Mo-bis(molybdopterin guanine dinucleotide).

Belongs to the prokaryotic molybdopterin-containing oxidoreductase family. Mo-bis(molybdopterin guanine dinucleotide) is required as a cofactor. Post-translationally, predicted to be exported by the Tat system. The position of the signal peptide cleavage has not been experimentally proven.

It localises to the periplasm. It catalyses the reaction trimethylamine + 2 Fe(III)-[cytochrome c] + H2O = trimethylamine N-oxide + 2 Fe(II)-[cytochrome c] + 3 H(+). Its function is as follows. Reduces trimethylamine-N-oxide (TMAO) into trimethylamine; an anaerobic reaction coupled to energy-yielding reactions. The sequence is that of Trimethylamine-N-oxide reductase (torA) from Pasteurella multocida (strain Pm70).